We begin with the raw amino-acid sequence, 214 residues long: GTP cyclohydrolase 1 (214 aa).

Zn(2+)-binding residues include C108, H111, and C179.

The protein belongs to the GTP cyclohydrolase I family. In terms of assembly, toroid-shaped homodecamer, composed of two pentamers of five dimers.

The enzyme catalyses GTP + H2O = 7,8-dihydroneopterin 3'-triphosphate + formate + H(+). Its pathway is cofactor biosynthesis; 7,8-dihydroneopterin triphosphate biosynthesis; 7,8-dihydroneopterin triphosphate from GTP: step 1/1. The polypeptide is GTP cyclohydrolase 1 (Shewanella putrefaciens (strain CN-32 / ATCC BAA-453)).